Reading from the N-terminus, the 229-residue chain is Ribonuclease 3 (229 aa).

The RNase III domain occupies 5 to 127; sequence LARLERQLGY…LIGAIYLDAG (123 aa). Glu40 is a binding site for Mg(2+). Residue Asp44 is part of the active site. Positions 113 and 116 each coordinate Mg(2+). Glu116 is an active-site residue. Residues 154–224 enclose the DRBM domain; the sequence is DPKTRLQEFL…AAAALIALGV (71 aa).

This sequence belongs to the ribonuclease III family. As to quaternary structure, homodimer. Mg(2+) serves as cofactor.

The protein localises to the cytoplasm. The catalysed reaction is Endonucleolytic cleavage to 5'-phosphomonoester.. Digests double-stranded RNA. Involved in the processing of primary rRNA transcript to yield the immediate precursors to the large and small rRNAs (23S and 16S). Processes some mRNAs, and tRNAs when they are encoded in the rRNA operon. Processes pre-crRNA and tracrRNA of type II CRISPR loci if present in the organism. This chain is Ribonuclease 3, found in Pseudomonas fluorescens (strain SBW25).